Consider the following 205-residue polypeptide: Adenylyl-sulfate kinase (205 aa).

39–46 (GLSGAGKS) provides a ligand contact to ATP. The active-site Phosphoserine intermediate is the Ser113.

Belongs to the APS kinase family.

The enzyme catalyses adenosine 5'-phosphosulfate + ATP = 3'-phosphoadenylyl sulfate + ADP + H(+). Its pathway is sulfur metabolism; hydrogen sulfide biosynthesis; sulfite from sulfate: step 2/3. In terms of biological role, catalyzes the synthesis of activated sulfate. This is Adenylyl-sulfate kinase from Vibrio parahaemolyticus serotype O3:K6 (strain RIMD 2210633).